A 602-amino-acid polypeptide reads, in one-letter code: Protein indeterminate-domain 5, chloroplastic (602 aa).

2 stretches are compositionally biased toward low complexity: residues Met1–Ser10 and His21–Ala30. Residues Met1–Pro50 constitute a chloroplast transit peptide. Residues Met1–Ala65 form a disordered region. Over residues Ala31–Ala48 the composition is skewed to pro residues. Thr60 carries the phosphothreonine modification. Ser71 is subject to Phosphoserine. 2 consecutive C2H2-type zinc fingers follow at residues Phe81–His103 and Tyr122–His152. The C2H2-type 2; degenerate zinc-finger motif lies at Trp157 to Gly180. 8 residues coordinate Zn(2+): Cys159, Cys162, His175, Cys179, Cys186, Cys188, His201, and Cys205. The segment at Tyr184–Ala207 adopts a CCHC-type 2; atypical zinc-finger fold. An SHR-binding region spans residues Arg194–Asp206. Disordered stretches follow at residues Lys443–Ser467 and Lys537–Phe602. Low complexity-rich tracts occupy residues Gly448–Ser467, Gln546–Gln560, and Ser570–Ser579.

Binds to RGA and SCL3 competitively. As to expression, highly expressed in leaf tissues.

It is found in the plastid. The protein resides in the chloroplast. Transcription factor acting as a positive regulator of the starch synthase SS4. Controls chloroplast development and starch granule formation. Binds DNA via its zinc fingers. Recognizes and binds to SCL3 promoter sequence 5'-AGACAA-3' to promote its expression when in complex with RGA. The protein is Protein indeterminate-domain 5, chloroplastic of Arabidopsis thaliana (Mouse-ear cress).